Reading from the N-terminus, the 710-residue chain is Lactoperoxidase (710 aa).

An N-terminal signal peptide occupies residues 1-23; that stretch reads MKVLLHLPALLASLTLLQTAASA. The propeptide occupies 24–80; it reads SDDPTAETDIIHDTVEEVKVWVNKAFLDSRDRLKMAMTTKIHSTRHLSDYLKHAKGR. A disulfide bridge connects residues Cys-130 and Cys-143. Residue Asp-223 participates in heme b binding. His-224 (proton acceptor) is an active-site residue. Asp-225 lines the Ca(2+) pocket. Cystine bridges form between Cys-244–Cys-254 and Cys-248–Cys-272. Thr-299, Phe-301, Asp-303, and Ser-305 together coordinate Ca(2+). Residue Ser-313 is modified to Phosphoserine. Cys-352 and Cys-363 form a disulfide bridge. The heme b site is built by Glu-373 and His-466. The residue at position 480 (Tyr-480) is a 3'-nitrotyrosine. 2 cysteine pairs are disulfide-bonded: Cys-571/Cys-628 and Cys-669/Cys-694.

This sequence belongs to the peroxidase family. It depends on Ca(2+) as a cofactor. Heme b is required as a cofactor. In terms of tissue distribution, expressed in the colon, including colonocytes and mucin-containing goblet cells. Not detected in the ileum.

It is found in the secreted. The protein resides in the cytoplasm. It catalyses the reaction 2 a phenolic donor + H2O2 = 2 a phenolic radical donor + 2 H2O. The enzyme catalyses thiocyanate + H2O2 + H(+) = hypothiocyanous acid + H2O. The catalysed reaction is iodide + H2O2 = hypoiodite + H2O. Functionally, heme-containing oxidoreductase which catalyzes the conversion of thiocyanate (SCN(-)) into antimicrobial agent hypothiocyanous acid (OSCN(-)) in the presence of hydrogen peroxide (H2O2). Also involved in the conversion of iodide (I(-)) into hypoiodite (IO(-)) in the presence of H2O2. Responsible for the inactivation of a wide range of micro-organisms and hence, important component of defense mechanism. May be implicated in airway host defense against infection. May contribute to maintaining an appropriate H2O2 cellular level, therefore protecting cells from H2O2-caused injuries and inflammation. In Mus musculus (Mouse), this protein is Lactoperoxidase.